The chain runs to 132 residues: MIVRTTAEITDTDRDITSEDGNWRSKRIILGGDKVGFSFHETTIKAGSVNEFHYANHVEAVWLVEGTGKLIDLDNDKVYELGPGSMYLLNGHERHRVEPETEMRMLCVFNPPVTGREVHDENGVYPLVEVPA.

Belongs to the ectoine synthase family.

The catalysed reaction is (2S)-4-acetamido-2-aminobutanoate = L-ectoine + H2O. Its pathway is amine and polyamine biosynthesis; ectoine biosynthesis; L-ectoine from L-aspartate 4-semialdehyde: step 3/3. Catalyzes the circularization of gamma-N-acetyl-alpha,gamma-diaminobutyric acid (ADABA) to ectoine (1,4,5,6-tetrahydro-2-methyl-4-pyrimidine carboxylic acid), which is an excellent osmoprotectant. This is L-ectoine synthase from Rhodococcus jostii (strain RHA1).